The following is a 229-amino-acid chain: Clathrin light chain B (229 aa).

Low complexity-rich tracts occupy residues 1–17 (MAED…GAPE) and 45–58 (GAPA…AQPG). The interval 1-70 (MAEDFGFFSS…SGAGSEDMST (70 aa)) is disordered. Ser-11 and Ser-13 each carry phosphoserine. The involved in binding clathrin heavy chain stretch occupies residues 93 to 155 (ADRLTQEPES…QVEKNKINNR (63 aa)). Thr-187 is modified (phosphothreonine). Cys-199 and Cys-209 form a disulfide bridge. At Lys-204 the chain carries N6-acetyllysine. Ser-217 is modified (phosphoserine).

Belongs to the clathrin light chain family. Clathrin coats are formed from molecules containing 3 heavy chains and 3 light chains. Interacts (via N-terminus) with HIP1. Interacts with HIP1R.

It localises to the cytoplasmic vesicle membrane. The protein resides in the membrane. It is found in the coated pit. Functionally, clathrin is the major protein of the polyhedral coat of coated pits and vesicles. This chain is Clathrin light chain B (Cltb), found in Mus musculus (Mouse).